Here is a 220-residue protein sequence, read N- to C-terminus: Protein GrpE (220 aa).

It belongs to the GrpE family. As to quaternary structure, homodimer.

Its subcellular location is the cytoplasm. In terms of biological role, participates actively in the response to hyperosmotic and heat shock by preventing the aggregation of stress-denatured proteins, in association with DnaK and GrpE. It is the nucleotide exchange factor for DnaK and may function as a thermosensor. Unfolded proteins bind initially to DnaJ; upon interaction with the DnaJ-bound protein, DnaK hydrolyzes its bound ATP, resulting in the formation of a stable complex. GrpE releases ADP from DnaK; ATP binding to DnaK triggers the release of the substrate protein, thus completing the reaction cycle. Several rounds of ATP-dependent interactions between DnaJ, DnaK and GrpE are required for fully efficient folding. This Bartonella quintana (strain Toulouse) (Rochalimaea quintana) protein is Protein GrpE.